The following is a 152-amino-acid chain: Transcriptional regulator MraZ (152 aa).

SpoVT-AbrB domains follow at residues 5–52 (TSAI…PLPE) and 81–124 (ASDC…HDTA).

Belongs to the MraZ family. In terms of assembly, forms oligomers.

It localises to the cytoplasm. It is found in the nucleoid. The polypeptide is Transcriptional regulator MraZ (Colwellia psychrerythraea (strain 34H / ATCC BAA-681) (Vibrio psychroerythus)).